Here is a 235-residue protein sequence, read N- to C-terminus: ATP-dependent dethiobiotin synthetase BioD (235 aa).

ATP is bound at residue 12-17 (GVGKTF). T16 serves as a coordination point for Mg(2+). Residue K37 is part of the active site. S41 contacts substrate. Residues D51, 112–115 (EGAG), and 202–204 (PKL) each bind ATP. 2 residues coordinate Mg(2+): D51 and E112.

The protein belongs to the dethiobiotin synthetase family. As to quaternary structure, homodimer. Mg(2+) is required as a cofactor.

It is found in the cytoplasm. The catalysed reaction is (7R,8S)-7,8-diammoniononanoate + CO2 + ATP = (4R,5S)-dethiobiotin + ADP + phosphate + 3 H(+). It functions in the pathway cofactor biosynthesis; biotin biosynthesis; biotin from 7,8-diaminononanoate: step 1/2. In terms of biological role, catalyzes a mechanistically unusual reaction, the ATP-dependent insertion of CO2 between the N7 and N8 nitrogen atoms of 7,8-diaminopelargonic acid (DAPA, also called 7,8-diammoniononanoate) to form a ureido ring. This is ATP-dependent dethiobiotin synthetase BioD from Bacillus licheniformis (strain ATCC 14580 / DSM 13 / JCM 2505 / CCUG 7422 / NBRC 12200 / NCIMB 9375 / NCTC 10341 / NRRL NRS-1264 / Gibson 46).